The primary structure comprises 211 residues: Protein CHLORORESPIRATORY REDUCTION 41, chloroplastic (211 aa).

A chloroplast-targeting transit peptide spans 1–38 (MASTSTLLLPSLSSKNLHIAVPIRTNSFVRRTTKFSTK). A coiled-coil region spans residues 136–163 (AKAGEIVAERAREEAEVLRDEGKVEERM).

As to quaternary structure, biogenesis factor component of the plastidial NDH subcomplex A.

Its subcellular location is the plastid. The protein resides in the chloroplast. The protein localises to the chloroplast stroma. In terms of biological role, required for both formation and activity of the chloroplast NAD(P)H dehydrogenase (NDH) complex of the photosynthetic electron transport chain. Functions in assembly or stabilization of the NDH complex; probably involved, together with NdhO and NdhH, in the formation of an NDH subcomplex A assembly intermediate (NAI500). This is Protein CHLORORESPIRATORY REDUCTION 41, chloroplastic from Arabidopsis thaliana (Mouse-ear cress).